The following is a 222-amino-acid chain: Octanoyltransferase (222 aa).

The BPL/LPL catalytic domain maps to 34–214; that stretch reads AEAPSTVLLL…EFRKHEEALV (181 aa). Residues 72-79, 144-146, and 157-159 contribute to the substrate site; these read RGGKLTWH, AIG, and GIA. The active-site Acyl-thioester intermediate is the C175.

The protein belongs to the LipB family.

It is found in the cytoplasm. It catalyses the reaction octanoyl-[ACP] + L-lysyl-[protein] = N(6)-octanoyl-L-lysyl-[protein] + holo-[ACP] + H(+). It participates in protein modification; protein lipoylation via endogenous pathway; protein N(6)-(lipoyl)lysine from octanoyl-[acyl-carrier-protein]: step 1/2. Catalyzes the transfer of endogenously produced octanoic acid from octanoyl-acyl-carrier-protein onto the lipoyl domains of lipoate-dependent enzymes. Lipoyl-ACP can also act as a substrate although octanoyl-ACP is likely to be the physiological substrate. This is Octanoyltransferase from Arthrobacter sp. (strain FB24).